A 182-amino-acid polypeptide reads, in one-letter code: UPF0301 protein NGK_1355 (182 aa).

The protein belongs to the UPF0301 (AlgH) family.

The chain is UPF0301 protein NGK_1355 from Neisseria gonorrhoeae (strain NCCP11945).